A 435-amino-acid polypeptide reads, in one-letter code: tRNA-2-methylthio-N(6)-dimethylallyladenosine synthase (435 aa).

Positions 1 to 117 constitute an MTTase N-terminal domain; it reads MKYFIKTYGC…MPKLLEDVKV (117 aa). Positions 10, 46, 80, 156, 160, and 163 each coordinate [4Fe-4S] cluster. Residues 142–370 form the Radical SAM core domain; it reads RDNSYCAYVT…LEIQKAITSK (229 aa). In terms of domain architecture, TRAM spans 373–433; it reads QRYKNTVQKV…FQSLDGVVQN (61 aa).

Belongs to the methylthiotransferase family. MiaB subfamily. As to quaternary structure, monomer. The cofactor is [4Fe-4S] cluster.

It is found in the cytoplasm. It carries out the reaction N(6)-dimethylallyladenosine(37) in tRNA + (sulfur carrier)-SH + AH2 + 2 S-adenosyl-L-methionine = 2-methylsulfanyl-N(6)-dimethylallyladenosine(37) in tRNA + (sulfur carrier)-H + 5'-deoxyadenosine + L-methionine + A + S-adenosyl-L-homocysteine + 2 H(+). Catalyzes the methylthiolation of N6-(dimethylallyl)adenosine (i(6)A), leading to the formation of 2-methylthio-N6-(dimethylallyl)adenosine (ms(2)i(6)A) at position 37 in tRNAs that read codons beginning with uridine. This Hydrogenobaculum sp. (strain Y04AAS1) protein is tRNA-2-methylthio-N(6)-dimethylallyladenosine synthase.